A 474-amino-acid chain; its full sequence is Trehalose-6-phosphate synthase (474 aa).

R10 provides a ligand contact to D-glucose 6-phosphate. 22 to 23 (GG) provides a ligand contact to UDP-alpha-D-glucose. Y77 and D131 together coordinate D-glucose 6-phosphate. Positions 263 and 268 each coordinate UDP-alpha-D-glucose. R301 contributes to the D-glucose 6-phosphate binding site. UDP-alpha-D-glucose-binding positions include F340 and 366–370 (LVAKE).

Belongs to the glycosyltransferase 20 family. In terms of assembly, homotetramer.

The enzyme catalyses D-glucose 6-phosphate + UDP-alpha-D-glucose = alpha,alpha-trehalose 6-phosphate + UDP + H(+). It functions in the pathway glycan biosynthesis; trehalose biosynthesis. Functionally, probably involved in the osmoprotection via the biosynthesis of trehalose. Catalyzes the transfer of glucose from UDP-alpha-D-glucose (UDP-Glc) to D-glucose 6-phosphate (Glc-6-P) to form trehalose-6-phosphate. Acts with retention of the anomeric configuration of the UDP-sugar donor. This Escherichia coli O157:H7 protein is Trehalose-6-phosphate synthase.